Consider the following 323-residue polypeptide: Delta-aminolevulinic acid dehydratase (323 aa).

Cys118, Cys120, and Cys128 together coordinate Zn(2+). Lys195 acts as the Schiff-base intermediate with substrate in catalysis. Residues Arg205 and Arg217 each contribute to the 5-aminolevulinate site. Glu233 contacts Mg(2+). The Schiff-base intermediate with substrate role is filled by Lys248. Ser274 and Tyr313 together coordinate 5-aminolevulinate.

Belongs to the ALAD family. In terms of assembly, homooctamer. The cofactor is Zn(2+).

The enzyme catalyses 2 5-aminolevulinate = porphobilinogen + 2 H2O + H(+). The protein operates within porphyrin-containing compound metabolism; protoporphyrin-IX biosynthesis; coproporphyrinogen-III from 5-aminolevulinate: step 1/4. Its function is as follows. Catalyzes an early step in the biosynthesis of tetrapyrroles. Binds two molecules of 5-aminolevulinate per subunit, each at a distinct site, and catalyzes their condensation to form porphobilinogen. The chain is Delta-aminolevulinic acid dehydratase (hemB) from Staphylococcus aureus.